Reading from the N-terminus, the 71-residue chain is Small ribosomal subunit protein bS21 (71 aa).

The tract at residues 40–71 is disordered; it reads KPTQERKRKAAAAVKRNIRRTSRDVTKRKRLY. Basic residues predominate over residues 45 to 71; that stretch reads RKRKAAAAVKRNIRRTSRDVTKRKRLY.

This sequence belongs to the bacterial ribosomal protein bS21 family.

This chain is Small ribosomal subunit protein bS21, found in Xylella fastidiosa (strain M23).